The primary structure comprises 239 residues: Orotidine 5'-phosphate decarboxylase (239 aa).

Substrate contacts are provided by residues D15, K36, 63 to 72 (DLKFHDIPNT), T127, R189, Q198, G218, and R219. The active-site Proton donor is K65.

It belongs to the OMP decarboxylase family. Type 1 subfamily. As to quaternary structure, homodimer.

The catalysed reaction is orotidine 5'-phosphate + H(+) = UMP + CO2. It participates in pyrimidine metabolism; UMP biosynthesis via de novo pathway; UMP from orotate: step 2/2. Its function is as follows. Catalyzes the decarboxylation of orotidine 5'-monophosphate (OMP) to uridine 5'-monophosphate (UMP). This chain is Orotidine 5'-phosphate decarboxylase, found in Prochlorococcus marinus (strain MIT 9515).